A 228-amino-acid chain; its full sequence is U1 small nuclear ribonucleoprotein C-2 (228 aa).

The Matrin-type zinc-finger motif lies at 4 to 36 (YYCDYCDTYLTHDSPSVRKQHNAGYKHKANVRT). The interval 105–228 (PGVRPPILPA…SYALPSEGNH (124 aa)) is disordered. 2 stretches are compositionally biased toward pro residues: residues 107–156 (VRPP…PPGS) and 164–175 (LPRPPTLPPPTS). Positions 178–190 (PGAPIPNSAAPPA) are enriched in low complexity. A compositionally biased stretch (pro residues) spans 196–214 (PPAPAGPTSGAPPAPPTAP).

This sequence belongs to the U1 small nuclear ribonucleoprotein C family. U1 snRNP is composed of the 7 core Sm proteins B/B', D1, D2, D3, E, F and G that assemble in a heptameric protein ring on the Sm site of the small nuclear RNA to form the core snRNP, and at least 3 U1 snRNP-specific proteins U1-70K, U1-A and U1-C. U1-C interacts with U1 snRNA and the 5' splice-site region of the pre-mRNA.

The protein localises to the nucleus. Component of the spliceosomal U1 snRNP, which is essential for recognition of the pre-mRNA 5' splice-site and the subsequent assembly of the spliceosome. U1-C is directly involved in initial 5' splice-site recognition for both constitutive and regulated alternative splicing. The interaction with the 5' splice-site seems to precede base-pairing between the pre-mRNA and the U1 snRNA. Stimulates commitment or early (E) complex formation by stabilizing the base pairing of the 5' end of the U1 snRNA and the 5' splice-site region. The polypeptide is U1 small nuclear ribonucleoprotein C-2 (Sorghum bicolor (Sorghum)).